The following is a 106-amino-acid chain: MRDLVRSGKVFLYGEFIGLLREDHRGFHFSYNPDYQGIPLSLSFPIEQSPFHSDTLFPYFASLVPEGWLKHKYALHQRIDESDMFRFLLNNGENMLGAVQIQEEKQ.

This is an uncharacterized protein from Haemophilus influenzae (strain ATCC 51907 / DSM 11121 / KW20 / Rd).